The chain runs to 201 residues: Small ribosomal subunit protein uS4c (201 aa).

The 63-residue stretch at 91–153 (MRLDNIVFRL…NASKKIVETN (63 aa)) folds into the S4 RNA-binding domain.

This sequence belongs to the universal ribosomal protein uS4 family. In terms of assembly, part of the 30S ribosomal subunit. Contacts protein S5. The interaction surface between S4 and S5 is involved in control of translational fidelity.

The protein localises to the plastid. The protein resides in the cyanelle. One of the primary rRNA binding proteins, it binds directly to 16S rRNA where it nucleates assembly of the body of the 30S subunit. Its function is as follows. With S5 and S12 plays an important role in translational accuracy. The chain is Small ribosomal subunit protein uS4c (rps4) from Cyanophora paradoxa.